Reading from the N-terminus, the 270-residue chain is Phospholysine phosphohistidine inorganic pyrophosphate phosphatase (270 aa).

Positions 17 and 19 each coordinate Mg(2+). Residues 17–19 (DIS), 54–55 (TN), and K189 each bind substrate. D214 contacts Mg(2+).

This sequence belongs to the HAD-like hydrolase superfamily. Homodimer. It depends on Mg(2+) as a cofactor.

Its subcellular location is the cytoplasm. The protein resides in the nucleus. The enzyme catalyses diphosphate + H2O = 2 phosphate + H(+). Functionally, phosphatase that hydrolyzes imidodiphosphate, 3-phosphohistidine and 6-phospholysine. Has broad substrate specificity and can also hydrolyze inorganic diphosphate, but with lower efficiency. This chain is Phospholysine phosphohistidine inorganic pyrophosphate phosphatase (Lhpp), found in Mus musculus (Mouse).